Consider the following 230-residue polypeptide: tRNA (guanine-N(7)-)-methyltransferase (230 aa).

Residues glutamate 61, glutamate 86, aspartate 113, and aspartate 135 each coordinate S-adenosyl-L-methionine. Aspartate 135 is an active-site residue. Substrate contacts are provided by residues lysine 139, aspartate 171, and 209 to 212 (TRYE).

The protein belongs to the class I-like SAM-binding methyltransferase superfamily. TrmB family.

It carries out the reaction guanosine(46) in tRNA + S-adenosyl-L-methionine = N(7)-methylguanosine(46) in tRNA + S-adenosyl-L-homocysteine. Its pathway is tRNA modification; N(7)-methylguanine-tRNA biosynthesis. Functionally, catalyzes the formation of N(7)-methylguanine at position 46 (m7G46) in tRNA. The sequence is that of tRNA (guanine-N(7)-)-methyltransferase from Azorhizobium caulinodans (strain ATCC 43989 / DSM 5975 / JCM 20966 / LMG 6465 / NBRC 14845 / NCIMB 13405 / ORS 571).